We begin with the raw amino-acid sequence, 527 residues long: Peptide chain release factor 3 (527 aa).

The region spanning 9-277 (AKRRTFAIIS…AVVNWAPMPL (269 aa)) is the tr-type G domain. GTP contacts are provided by residues 18–25 (SHPDAGKT), 86–90 (DTPGH), and 140–143 (NKLD).

This sequence belongs to the TRAFAC class translation factor GTPase superfamily. Classic translation factor GTPase family. PrfC subfamily.

The protein localises to the cytoplasm. Functionally, increases the formation of ribosomal termination complexes and stimulates activities of RF-1 and RF-2. It binds guanine nucleotides and has strong preference for UGA stop codons. It may interact directly with the ribosome. The stimulation of RF-1 and RF-2 is significantly reduced by GTP and GDP, but not by GMP. The sequence is that of Peptide chain release factor 3 from Pseudomonas syringae pv. tomato (strain ATCC BAA-871 / DC3000).